The primary structure comprises 523 residues: Leucine-rich repeat transmembrane neuronal protein 1 (523 aa).

An N-terminal signal peptide occupies residues 1-34; it reads MDFLLLGLCLHWLLRRPSGVVLCLLGACFQMLPA. An LRRNT domain is found at 35–63; that stretch reads APSGCPGQCRCEGRLLYCEALNLTEAPHN. The Extracellular segment spans residues 35–428; it reads APSGCPGQCR…HAENAVQIHK (394 aa). N-linked (GlcNAc...) asparagine glycosylation is found at Asn56 and Asn63. LRR repeat units lie at residues 64-87, 89-111, 112-135, 136-159, 161-183, 184-207, 209-231, 233-255, 256-278, and 280-302; these read LSGLLGLSLRYNSLSELRAGQFTG, MQLTWLYLDHNHICSVQGDAFQK, LRRVKELTLSSNQITELANTTFRP, MPNLRSVDLSYNKLQALAPDLFHG, RKLTTLHMRANAIQFVPVRIFQD, CRSLKFLDIGYNQLKSLARNSFAG, FKLTELHLEHNDLIKVNFAHFPR, ISLNSLCLRRNKVAIVVSSLDWV, WNLEKMDLSGNEIEYMEPHVFET, and PYLQSLQLDSNRLTYIEPRILNS. N-linked (GlcNAc...) asparagine glycosylation occurs at Asn130. The LRRCT domain maps to 314–365; the sequence is NLWDCGRNVCALASWLSNFQGRYDANLQCASPEYAQGEDVLDAVYAFHLCED. Residue Asn381 is glycosylated (N-linked (GlcNAc...) asparagine). The helical transmembrane segment at 429–449 threads the bilayer; the sequence is VVTGTMALIFSFLIVVLVLYV. Residues 450-523 lie on the Cytoplasmic side of the membrane; that stretch reads SWKCFPASLR…HQQPARECEV (74 aa). The May be involved in DLG4-binding signature appears at 520–523; sequence ECEV.

Belongs to the LRRTM family. Interacts with DLG4.

The protein localises to the cell membrane. It localises to the postsynaptic cell membrane. Functionally, exhibits strong synaptogenic activity, restricted to excitatory presynaptic differentiation, acting at both pre- and postsynaptic level. This chain is Leucine-rich repeat transmembrane neuronal protein 1 (Lrrtm1), found in Rattus norvegicus (Rat).